We begin with the raw amino-acid sequence, 276 residues long: Undecaprenyl-diphosphatase 1 (276 aa).

The next 5 helical transmembrane spans lie at 85 to 105 (MNVV…EKTI), 108 to 128 (VLFA…VILW), 187 to 207 (VATE…TLYE), 217 to 237 (VDSI…AFAC), and 253 to 273 (FAWY…SGWI).

Belongs to the UppP family.

It is found in the cell inner membrane. It catalyses the reaction di-trans,octa-cis-undecaprenyl diphosphate + H2O = di-trans,octa-cis-undecaprenyl phosphate + phosphate + H(+). In terms of biological role, catalyzes the dephosphorylation of undecaprenyl diphosphate (UPP). Confers resistance to bacitracin. The polypeptide is Undecaprenyl-diphosphatase 1 (Burkholderia thailandensis (strain ATCC 700388 / DSM 13276 / CCUG 48851 / CIP 106301 / E264)).